A 489-amino-acid chain; its full sequence is Mitochondrial distribution and morphology protein 12 (489 aa).

An SMP-LTD domain is found at 1–489; the sequence is MSIDLNWEAA…VFPSFWTFLV (489 aa). The segment covering 72–82 has biased composition (acidic residues); sequence ESDSEDEDEGH. 3 disordered regions span residues 72–97, 201–313, and 394–432; these read ESDSEDEDEGHEDIQSDASSDRAAAD, WPDA…MRER, and DINHQQRQQQQQQHPYPTTNTSESINNNNPETHPPQPRR. The span at 231–249 shows a compositional bias: polar residues; it reads LDTGSPSRPSTANTNPTQL. 2 stretches are compositionally biased toward low complexity: residues 250–265 and 398–424; these read SHGQSAAGSSSNNTSN and QQRQQQQQQHPYPTTNTSESINNNNPE.

The protein belongs to the MDM12 family. In terms of assembly, component of the ER-mitochondria encounter structure (ERMES) or MDM complex, composed of MMM1, MDM10, mdm12 and MDM34. An MMM1 homodimer associates with one molecule of mdm12 on each side in a pairwise head-to-tail manner, and the SMP-LTD domains of MMM1 and mdm12 generate a continuous hydrophobic tunnel for phospholipid trafficking.

Its subcellular location is the mitochondrion outer membrane. It is found in the endoplasmic reticulum membrane. Functionally, component of the ERMES/MDM complex, which serves as a molecular tether to connect the endoplasmic reticulum (ER) and mitochondria. Components of this complex are involved in the control of mitochondrial shape and protein biogenesis, and function in nonvesicular lipid trafficking between the ER and mitochondria. mdm12 is required for the interaction of the ER-resident membrane protein MMM1 and the outer mitochondrial membrane-resident beta-barrel protein MDM10. The mdm12-MMM1 subcomplex functions in the major beta-barrel assembly pathway that is responsible for biogenesis of all mitochondrial outer membrane beta-barrel proteins, and acts in a late step after the SAM complex. The MDM10-mdm12-MMM1 subcomplex further acts in the TOM40-specific pathway after the action of the mdm12-MMM1 complex. Essential for establishing and maintaining the structure of mitochondria and maintenance of mtDNA nucleoids. This is Mitochondrial distribution and morphology protein 12 from Talaromyces marneffei (strain ATCC 18224 / CBS 334.59 / QM 7333) (Penicillium marneffei).